The primary structure comprises 245 residues: MSQPGRVDKQPGYILHTQPYRETSLLLEVLSRDHGRFSLVARSARRPRSDLRGVLLPFQPLTLSWFGKGELRTLHAADWDGGVRALTGLPLVCGFYLNELMMKLTARDDPEPRAFSVYDRAVRELAGGAPLSTALRRYELRLAQVLGYAPALSRDSRGEAIAADRHYLCRDAALPEPDEHPELAPVGRVVRLPGEALLALDADDYREPATRGHARLLSRVWLSALLGDEPLASRQLLQAIQSLSD.

This sequence belongs to the RecO family.

Involved in DNA repair and RecF pathway recombination. The protein is DNA repair protein RecO of Chromobacterium violaceum (strain ATCC 12472 / DSM 30191 / JCM 1249 / CCUG 213 / NBRC 12614 / NCIMB 9131 / NCTC 9757 / MK).